Here is a 1231-residue protein sequence, read N- to C-terminus: Cohesin subunit SA-2 (1231 aa).

An N-acetylmethionine modification is found at methionine 1. A disordered region spans residues 1–75 (MIAAPEIPTD…GSNRMNGHHQ (75 aa)). Basic residues predominate over residues 36-48 (KQGKGKTCKKGKK). The region spanning 293-378 (FVHRYRDAIA…SRFKDRIVSM (86 aa)) is the SCD domain. Lysine 607 is subject to N6-acetyllysine. Serine 1058, serine 1061, serine 1064, and serine 1065 each carry phosphoserine. Residues 1062–1087 (GMSSRGSTVRSKKSKPSTGKRKVVEG) form a disordered region. Over residues 1071–1082 (RSKKSKPSTGKR) the composition is skewed to basic residues. Threonine 1112 carries the phosphothreonine modification. Serine 1177 and serine 1178 each carry phosphoserine.

The protein belongs to the SCC3 family. As to quaternary structure, interacts directly with RAD21 in cohesin complex. Cohesin complexes are composed of a heterodimer between a SMC1 protein (SMC1A or SMC1B) and SMC3, which are attached via their hinge domain, and RAD21 which link them at their heads, and one STAG protein (STAG1, STAG2 or STAG3). In cohesin complexes, STAG2 is mutually exclusive with STAG1 and STAG3. In terms of processing, phosphorylated by PLK1. The large dissociation of cohesin from chromosome arms during prophase is partly due to its phosphorylation.

It localises to the nucleus. The protein localises to the chromosome. The protein resides in the centromere. In terms of biological role, component of cohesin complex, a complex required for the cohesion of sister chromatids after DNA replication. The cohesin complex apparently forms a large proteinaceous ring within which sister chromatids can be trapped. At anaphase, the complex is cleaved and dissociates from chromatin, allowing sister chromatids to segregate. The cohesin complex may also play a role in spindle pole assembly during mitosis. In Mus musculus (Mouse), this protein is Cohesin subunit SA-2 (Stag2).